Here is a 370-residue protein sequence, read N- to C-terminus: Polygalacturonase 1 (370 aa).

The N-terminal stretch at 1–18 (MRTSILSMLALGAAAVSA) is a signal peptide. C36 and C51 are joined by a disulfide. PbH1 repeat units lie at residues 163-194 (ADNL…DVGE), 195-216 (STYI…AINS), 217-237 (GENI…SIGS), 246-267 (VKNV…RIKT), and 275-297 (VADV…VIEQ). D209 functions as the Proton donor in the catalytic mechanism. C211 and C227 form a disulfide bridge. Residue H231 is part of the active site. N-linked (GlcNAc...) asparagine glycosylation occurs at N248. Disulfide bonds link C337/C342 and C361/C370.

This sequence belongs to the glycosyl hydrolase 28 family.

Its subcellular location is the secreted. It carries out the reaction (1,4-alpha-D-galacturonosyl)n+m + H2O = (1,4-alpha-D-galacturonosyl)n + (1,4-alpha-D-galacturonosyl)m.. The chain is Polygalacturonase 1 (PG1) from Penicillium olsonii.